Here is a 569-residue protein sequence, read N- to C-terminus: MRVSKYLLSTQKETPANAEVVSHQLMLRAGMIRRNASGLYSWLPSGLRVLRKVEAIVREEMNNAGAVEILMPMVQPADLWVETGRWDKFGPELLRFQDRHNRDFVLGPTHEEVITDIIRKEVSSYKQLPLNLYQIQTKFRDEVRPRFGVMRSREFLMKDAYSFHLDQETMDDTYQAMYTAYSNILGRMGLAFRPVLADTGSIGGSMSHEFHVLANSGEDLIAYSTESDYAANIEKAEAPMPTEPRGAATMEMSVIDTPNAKTIEELVEQHGIAIEKTIKTIIVKGASEEAPLVAVIVRGDHELNEVKVEKLDAVLAPFEMAGEAEIRDALGAGPGSLGPVGMTIPVYVDHSVNVMSDFAAGANQDGKHYVGINWERDLPQAEVADLRNVIEGEPSPCGKGTIGLLRGIEVGHIFQLGTNYSKAMGASVLDENGKAQTLLMGCYGVGVSRIVAAAIEQNHDDRGIIWPAAIAPFKVGILPMNMHKSHRIKDMAEKLYSDLSDAGIEVLFDDRKERPGVMFADMELIGLPHVIVIGERNIDNGVFEYKNRRTGEKQEIPFEEIVDFIKSAK.

It belongs to the class-II aminoacyl-tRNA synthetase family. ProS type 1 subfamily. In terms of assembly, homodimer.

The protein resides in the cytoplasm. It carries out the reaction tRNA(Pro) + L-proline + ATP = L-prolyl-tRNA(Pro) + AMP + diphosphate. Functionally, catalyzes the attachment of proline to tRNA(Pro) in a two-step reaction: proline is first activated by ATP to form Pro-AMP and then transferred to the acceptor end of tRNA(Pro). As ProRS can inadvertently accommodate and process non-cognate amino acids such as alanine and cysteine, to avoid such errors it has two additional distinct editing activities against alanine. One activity is designated as 'pretransfer' editing and involves the tRNA(Pro)-independent hydrolysis of activated Ala-AMP. The other activity is designated 'posttransfer' editing and involves deacylation of mischarged Ala-tRNA(Pro). The misacylated Cys-tRNA(Pro) is not edited by ProRS. The chain is Proline--tRNA ligase from Shewanella loihica (strain ATCC BAA-1088 / PV-4).